The sequence spans 221 residues: PKHD-type hydroxylase PMT_0286 (221 aa).

The Fe2OG dioxygenase domain maps to 80-174 (HIHGVMFSRS…RLVCVGWIQS (95 aa)). Fe cation-binding residues include H98, D100, and H155. R165 serves as a coordination point for 2-oxoglutarate.

Requires Fe(2+) as cofactor. It depends on L-ascorbate as a cofactor.

The sequence is that of PKHD-type hydroxylase PMT_0286 from Prochlorococcus marinus (strain MIT 9313).